A 438-amino-acid chain; its full sequence is Serine hydroxymethyltransferase 1 (438 aa).

(6S)-5,6,7,8-tetrahydrofolate contacts are provided by residues Leu-130 and 134–136; that span reads GHL. An N6-(pyridoxal phosphate)lysine modification is found at Lys-239.

Belongs to the SHMT family. In terms of assembly, homodimer. Pyridoxal 5'-phosphate is required as a cofactor.

It is found in the cytoplasm. It carries out the reaction (6R)-5,10-methylene-5,6,7,8-tetrahydrofolate + glycine + H2O = (6S)-5,6,7,8-tetrahydrofolate + L-serine. The protein operates within one-carbon metabolism; tetrahydrofolate interconversion. It participates in amino-acid biosynthesis; glycine biosynthesis; glycine from L-serine: step 1/1. Functionally, catalyzes the reversible interconversion of serine and glycine with tetrahydrofolate (THF) serving as the one-carbon carrier. This reaction serves as the major source of one-carbon groups required for the biosynthesis of purines, thymidylate, methionine, and other important biomolecules. Also exhibits THF-independent aldolase activity toward beta-hydroxyamino acids, producing glycine and aldehydes, via a retro-aldol mechanism. In Mycobacterium tuberculosis (strain CDC 1551 / Oshkosh), this protein is Serine hydroxymethyltransferase 1.